A 301-amino-acid polypeptide reads, in one-letter code: GTPase Era (301 aa).

Residues 11 to 180 (RSGIITLVGR…KDVFFENCLN (170 aa)) enclose the Era-type G domain. The interval 19-26 (GRPNVGKS) is G1. 19–26 (GRPNVGKS) contributes to the GTP binding site. The G2 stretch occupies residues 45–49 (QTTRR). The G3 stretch occupies residues 66–69 (DTPG). GTP-binding positions include 66–70 (DTPGI) and 129–132 (TKID). The segment at 129-132 (TKID) is G4. The tract at residues 159–161 (VSA) is G5. A KH type-2 domain is found at 210-286 (LEQEIPHSLL…YLRLIVKVVK (77 aa)).

It belongs to the TRAFAC class TrmE-Era-EngA-EngB-Septin-like GTPase superfamily. Era GTPase family. In terms of assembly, monomer.

It is found in the cytoplasm. The protein resides in the cell membrane. An essential GTPase that binds both GDP and GTP, with rapid nucleotide exchange. Plays a role in 16S rRNA processing and 30S ribosomal subunit biogenesis and possibly also in cell cycle regulation and energy metabolism. This chain is GTPase Era, found in Tropheryma whipplei (strain TW08/27) (Whipple's bacillus).